A 135-amino-acid chain; its full sequence is Galectin-1 (135 aa).

Ala2 is subject to N-acetylalanine. The Galectin domain occupies Gly4–Glu135. 2 positions are modified to N6-acetyllysine: Lys13 and Lys29. Phosphoserine is present on Ser30. A beta-D-galactoside contacts are provided by residues His45–Arg49, His53, Asn62, and Trp69–Glu72. An N6-acetyllysine; alternate modification is found at Lys108. Residue Lys108 is modified to N6-succinyllysine; alternate. Lys128 bears the N6-acetyllysine mark.

Homodimer. Binds LGALS3BP. Interacts with CD2, CD3, CD4, CD6, CD7, CD43, ALCAM and CD45. Interacts with laminin (via poly-N-acetyllactosamine). Interacts with SUSD2. Interacts with cargo receptor TMED10; the interaction mediates the translocation from the cytoplasm into the ERGIC (endoplasmic reticulum-Golgi intermediate compartment) and thereby secretion.

Its subcellular location is the secreted. It is found in the extracellular space. The protein resides in the extracellular matrix. The protein localises to the cytoplasm. In terms of biological role, lectin that binds beta-galactoside and a wide array of complex carbohydrates. Plays a role in regulating apoptosis, cell proliferation and cell differentiation. Inhibits CD45 protein phosphatase activity and therefore the dephosphorylation of Lyn kinase. Strong inducer of T-cell apoptosis. The sequence is that of Galectin-1 (LGALS1) from Bos taurus (Bovine).